The primary structure comprises 473 residues: Isocitrate dehydrogenase [NADP] (473 aa).

Residue T104 participates in NADP(+) binding. Residues S113, N115, R119, R129, and R153 each contribute to the D-threo-isocitrate site. D362 lines the Mg(2+) pocket. NADP(+) is bound by residues 394–400 (HGTAPKH), N407, Y446, and R450.

The protein belongs to the isocitrate and isopropylmalate dehydrogenases family. In terms of assembly, homodimer. Requires Mg(2+) as cofactor. Mn(2+) is required as a cofactor.

It catalyses the reaction D-threo-isocitrate + NADP(+) = 2-oxoglutarate + CO2 + NADPH. With respect to regulation, inhibited by either oxaloacetate or glyoxylate. Also inhibited by the adenine nucleotides AMP, ADP and ATP and by NADPH, which inhibits the activity by 28% when it is added to the assay mixture at 0.25 mM. Catalyzes the oxidative decarboxylation of isocitrate to 2-oxoglutarate and carbon dioxide with the concomitant reduction of NADP(+). This is Isocitrate dehydrogenase [NADP] from Nostoc sp. (strain PCC 7120 / SAG 25.82 / UTEX 2576).